A 129-amino-acid chain; its full sequence is Small ribosomal subunit protein uS11 (129 aa).

The protein belongs to the universal ribosomal protein uS11 family. As to quaternary structure, part of the 30S ribosomal subunit. Interacts with proteins S7 and S18. Binds to IF-3.

In terms of biological role, located on the platform of the 30S subunit, it bridges several disparate RNA helices of the 16S rRNA. Forms part of the Shine-Dalgarno cleft in the 70S ribosome. This chain is Small ribosomal subunit protein uS11, found in Desulfitobacterium hafniense (strain DSM 10664 / DCB-2).